The following is a 994-amino-acid chain: Probable beta-galactosidase C (994 aa).

An N-terminal signal peptide occupies residues 1-19 (MKLQSILSCWAILVAQIWA). Residue Tyr78 coordinates substrate. Asn88 is a glycosylation site (N-linked (GlcNAc...) asparagine). Substrate contacts are provided by Asn123, Ala124, Glu125, and Asn183. Glu184 functions as the Proton donor in the catalytic mechanism. Tyr247 contacts substrate. Cys253 and Cys301 are disulfide-bonded. N-linked (GlcNAc...) asparagine glycosylation occurs at Asn272. The active-site Nucleophile is Glu283. A substrate-binding site is contributed by Tyr350. Residues Asn388, Asn407, Asn433, Asn500, Asn514, Asn521, Asn584, Asn600, Asn674, Asn712, Asn717, Asn757, Asn861, and Asn969 are each glycosylated (N-linked (GlcNAc...) asparagine).

The protein belongs to the glycosyl hydrolase 35 family.

Its subcellular location is the secreted. It carries out the reaction Hydrolysis of terminal non-reducing beta-D-galactose residues in beta-D-galactosides.. Its function is as follows. Cleaves beta-linked terminal galactosyl residues from gangliosides, glycoproteins, and glycosaminoglycans. The protein is Probable beta-galactosidase C (lacC) of Aspergillus niger (strain ATCC MYA-4892 / CBS 513.88 / FGSC A1513).